A 343-amino-acid polypeptide reads, in one-letter code: Probable dolichyl-diphosphooligosaccharide--protein glycosyltransferase subunit 3A (343 aa).

Residues 1 to 22 (MVIQTNLSYRFFILIVFLFTLA) form the signal peptide. Residues 23–185 (NPKSDSDLKN…TVCSIQRPPL (163 aa)) are Lumenal-facing. Asn105, Asn108, and Asn146 each carry an N-linked (GlcNAc...) asparagine glycan. The helical transmembrane segment at 186-206 (ISKTQIGIIVAIIIISTPILI) threads the bilayer. The Cytoplasmic segment spans residues 207 to 220 (KKILKGETLLHDHR). A helical transmembrane segment spans residues 221–241 (IWLVGAVFVYFFSVSGTMHNI). Topologically, residues 242 to 273 (IREMPMYIKDYEDSSKFVFFIEESEMQLGAEG) are lumenal. Residues 274 to 294 (FFVGFLYTVVGLLLAFVTNVV) traverse the membrane as a helical segment. Residues 295–304 (VRVKKLDEQR) lie on the Cytoplasmic side of the membrane. A helical membrane pass occupies residues 305–325 (MAMLLALSISFWAVRKVVYLD). Over 326-343 (NWKTGYEIYPYWPSSWRG) the chain is Lumenal.

Belongs to the OST3/OST6 family. In terms of assembly, component of the oligosaccharyltransferase (OST) complex.

The protein resides in the endoplasmic reticulum membrane. Subunit of the oligosaccharyl transferase (OST) complex that catalyzes the initial transfer of a defined glycan (Glc(3)Man(9)GlcNAc(2) in eukaryotes) from the lipid carrier dolichol-pyrophosphate to an asparagine residue within an Asn-X-Ser/Thr consensus motif in nascent polypeptide chains, the first step in protein N-glycosylation. N-glycosylation occurs cotranslationally and the complex associates with the Sec61 complex at the channel-forming translocon complex that mediates protein translocation across the endoplasmic reticulum (ER). All subunits are required for a maximal enzyme activity. In Arabidopsis thaliana (Mouse-ear cress), this protein is Probable dolichyl-diphosphooligosaccharide--protein glycosyltransferase subunit 3A (OST3A).